The primary structure comprises 377 residues: Alanine racemase (377 aa).

Lys-37 (proton acceptor; specific for D-alanine) is an active-site residue. At Lys-37 the chain carries N6-(pyridoxal phosphate)lysine. A substrate-binding site is contributed by Arg-135. The active-site Proton acceptor; specific for L-alanine is the Tyr-271. Substrate is bound at residue Met-319.

It belongs to the alanine racemase family. Pyridoxal 5'-phosphate serves as cofactor.

It catalyses the reaction L-alanine = D-alanine. The protein operates within amino-acid biosynthesis; D-alanine biosynthesis; D-alanine from L-alanine: step 1/1. In terms of biological role, catalyzes the interconversion of L-alanine and D-alanine. May also act on other amino acids. The polypeptide is Alanine racemase (alr) (Helicobacter pylori (strain G27)).